The sequence spans 428 residues: Light-independent protochlorophyllide reductase subunit N (428 aa).

[4Fe-4S] cluster-binding residues include C29, C54, and C115.

The protein belongs to the BchN/ChlN family. Protochlorophyllide reductase is composed of three subunits; BchL, BchN and BchB. Forms a heterotetramer of two BchB and two BchN subunits. Requires [4Fe-4S] cluster as cofactor.

It carries out the reaction chlorophyllide a + oxidized 2[4Fe-4S]-[ferredoxin] + 2 ADP + 2 phosphate = protochlorophyllide a + reduced 2[4Fe-4S]-[ferredoxin] + 2 ATP + 2 H2O. Its pathway is porphyrin-containing compound metabolism; bacteriochlorophyll biosynthesis (light-independent). Functionally, component of the dark-operative protochlorophyllide reductase (DPOR) that uses Mg-ATP and reduced ferredoxin to reduce ring D of protochlorophyllide (Pchlide) to form chlorophyllide a (Chlide). This reaction is light-independent. The NB-protein (BchN-BchB) is the catalytic component of the complex. The sequence is that of Light-independent protochlorophyllide reductase subunit N from Roseobacter denitrificans (strain ATCC 33942 / OCh 114) (Erythrobacter sp. (strain OCh 114)).